Here is a 437-residue protein sequence, read N- to C-terminus: MALVLRLMGGAAGMGAKAVGGACCELGSACFRQITKGLPHPTECGCLGSLFFYLGIHDHQKFNVLVEIHELDRVPKSCSLYMTIEAGRWSATSQVVKVKGQDQRVVVEERLMVHIRQVDNEVKIFLFKKGLVKTTRLANLVLKVKEDMIDKKFPKRTWYNMKVENGKSQPRINLSLHKLDPGLPTNQSPLLQQAMLIAQQEADEKGEELKLDLAKMTAKERLTFFSQVLEGPLERLNANGGACMQFYYKAVEVKPDRWEWCYWESAAACKEGKEKEGSIPFLAISLVLPDRKNRNVFFVRYHDKDNQHDVFFRRVDRDRNLWSDGLYEFIEKLRAYRETCSTRVPSQKGADGEEKKKKKKRREDGEDSSGEKSPRKSGGKKSRRPSTSPRLDISTARRLHSPRAQVPSKSPCAHQQMYEEVMISTQSSVVGDEEPQT.

Positions 45 to 179 (GCLGSLFFYL…PRINLSLHKL (135 aa)) constitute a C2 domain. In terms of domain architecture, PH spans 230–338 (EGPLERLNAN…FIEKLRAYRE (109 aa)). The interval 341–437 (STRVPSQKGA…SVVGDEEPQT (97 aa)) is disordered. The segment covering 375–384 (RKSGGKKSRR) has biased composition (basic residues).

Interacts with RASP1. Interacts with RASP3.

It localises to the cytoplasmic vesicle. The protein resides in the secretory vesicle. It is found in the rhoptry membrane. In terms of biological role, essential for tachyzoite invasion of host cells by controlling rhoptry secretion. Binds to phosphatidic acid (PA) and phosphatidylinositol 4,5-bisphosphate (PIP2) lipids and thus, likely contributes to the assembly of the machinery that docks or primes the rhoptry to the parasite cell membrane prior to the fusion with the host cell membrane. The sequence is that of Rhoptry apical surface protein 2 from Toxoplasma gondii (strain ATCC 50853 / GT1).